The primary structure comprises 153 residues: Ribosome-binding factor A (153 aa).

The disordered stretch occupies residues 116-153 (DAQVAEQAQGAQYAAGEDAYRTPSDEDDAEGPESAPRV). Low complexity predominate over residues 119–132 (VAEQAQGAQYAAGE).

This sequence belongs to the RbfA family. In terms of assembly, monomer. Binds 30S ribosomal subunits, but not 50S ribosomal subunits or 70S ribosomes.

Its subcellular location is the cytoplasm. Functionally, one of several proteins that assist in the late maturation steps of the functional core of the 30S ribosomal subunit. Associates with free 30S ribosomal subunits (but not with 30S subunits that are part of 70S ribosomes or polysomes). Required for efficient processing of 16S rRNA. May interact with the 5'-terminal helix region of 16S rRNA. This Kocuria rhizophila (strain ATCC 9341 / DSM 348 / NBRC 103217 / DC2201) protein is Ribosome-binding factor A.